The sequence spans 297 residues: 4-diphosphocytidyl-2-C-methyl-D-erythritol kinase (297 aa).

Lys-6 is an active-site residue. 94 to 104 contributes to the ATP binding site; the sequence is PVAGGMAGGSA. Residue Asp-136 is part of the active site.

The protein belongs to the GHMP kinase family. IspE subfamily.

The catalysed reaction is 4-CDP-2-C-methyl-D-erythritol + ATP = 4-CDP-2-C-methyl-D-erythritol 2-phosphate + ADP + H(+). Its pathway is isoprenoid biosynthesis; isopentenyl diphosphate biosynthesis via DXP pathway; isopentenyl diphosphate from 1-deoxy-D-xylulose 5-phosphate: step 3/6. In terms of biological role, catalyzes the phosphorylation of the position 2 hydroxy group of 4-diphosphocytidyl-2C-methyl-D-erythritol. In Nocardioides sp. (strain ATCC BAA-499 / JS614), this protein is 4-diphosphocytidyl-2-C-methyl-D-erythritol kinase.